We begin with the raw amino-acid sequence, 213 residues long: Membrane-spanning 4-domains subfamily A member 3 (213 aa).

The Cytoplasmic segment spans residues 1–26 (MKPEETGGSVYQPLDESRHVQRGVLQ). The helical transmembrane segment at 27 to 47 (ALGAIQILNGILILALGIFLV) threads the bilayer. Residues 48–58 (CLQHVSHHFRH) are Extracellular-facing. The chain crosses the membrane as a helical span at residues 59-79 (FFFFTFYTGYPLWGAVFFISS). Residues 80 to 97 (GSLTVAAGRNPTRMLMQN) are Cytoplasmic-facing. The chain crosses the membrane as a helical span at residues 98 to 118 (SFGINIASTTIAFVGTVFLSV). Over 119-148 (HLAFNTQAFKGCQSSPSPDVCISLGSSSDG) the chain is Extracellular. Residues 149-169 (LVSLMLILTLLELSVTISISA) traverse the membrane as a helical segment. At 170–213 (MWCLGNVCGLREAITSPPNSVESGILPEGSDSENLNTQPQASEE) the chain is on the cytoplasmic side. The interval 189-213 (SVESGILPEGSDSENLNTQPQASEE) is disordered. Residues 201 to 213 (SENLNTQPQASEE) are compositionally biased toward polar residues.

Belongs to the MS4A family. As to quaternary structure, interacts with CDKN3. Interacts with CDKN3-CDK2 complexes through its binding to CDKN3; this interaction facilitates dissociation of cyclin A from CDKN3-CDK2 complexes. As to expression, expressed at low levels only in specific immune tissues, such as, spleen, bone marrow and peripheral blood leukocytes.

The protein resides in the membrane. In terms of biological role, hematopoietic modulator for the G1-S cell cycle transition. Modulates the level of phosphorylation of cyclin-dependent kinase 2 (CDK2) through its direct binding to cyclin-dependent kinase inhibitor 3 (CDKN3/KAP). The protein is Membrane-spanning 4-domains subfamily A member 3 (Ms4a3) of Mus musculus (Mouse).